A 242-amino-acid chain; its full sequence is GATA zinc finger domain-containing protein 1 (242 aa).

The GATA-type zinc-finger motif lies at 9–33 (CAVCKTQSSSMWKKGNQGEILCNGC). The segment at 44–85 (GASASSTIQQNNGGGKQSKQEIHRRSARLRSTKYKAPASEKK) is disordered. The segment covering 45–54 (ASASSTIQQN) has biased composition (low complexity).

The protein localises to the nucleus. Its function is as follows. Component of some chromatin complex recruited to chromatin sites methylated 'Lys-4' of histone H3 (H3K4me), with a preference for trimethylated form (H3K4me3). In Danio rerio (Zebrafish), this protein is GATA zinc finger domain-containing protein 1 (gatad1).